A 423-amino-acid polypeptide reads, in one-letter code: Glutamyl-tRNA reductase (423 aa).

Residues 51 to 54 (TCNR), serine 99, 104 to 106 (EDQ), and glutamine 110 contribute to the substrate site. The active-site Nucleophile is the cysteine 52. 179-184 (GSGEMG) is a binding site for NADP(+).

The protein belongs to the glutamyl-tRNA reductase family. As to quaternary structure, homodimer.

It catalyses the reaction (S)-4-amino-5-oxopentanoate + tRNA(Glu) + NADP(+) = L-glutamyl-tRNA(Glu) + NADPH + H(+). Its pathway is porphyrin-containing compound metabolism; protoporphyrin-IX biosynthesis; 5-aminolevulinate from L-glutamyl-tRNA(Glu): step 1/2. Catalyzes the NADPH-dependent reduction of glutamyl-tRNA(Glu) to glutamate 1-semialdehyde (GSA). The protein is Glutamyl-tRNA reductase of Methanoculleus marisnigri (strain ATCC 35101 / DSM 1498 / JR1).